A 505-amino-acid polypeptide reads, in one-letter code: Lysine--tRNA ligase (505 aa).

Mg(2+) is bound by residues Glu-415 and Glu-422.

It belongs to the class-II aminoacyl-tRNA synthetase family. Homodimer. Requires Mg(2+) as cofactor.

The protein resides in the cytoplasm. The enzyme catalyses tRNA(Lys) + L-lysine + ATP = L-lysyl-tRNA(Lys) + AMP + diphosphate. In Shigella dysenteriae serotype 1 (strain Sd197), this protein is Lysine--tRNA ligase.